The primary structure comprises 354 residues: MSEPNVRASFADNRRPLSKTKGQLLNMPPVITTALYTAFPVIFLLDKVLAFLTWTNDDPYTNFIAIAIYIMVVKYWTVVACTVLPTIIALGTCASLWFLKTTIDDLRSETAPPTIEEIIDTLINMQARFSYIVEPFSYFGSLSGSDYFNLGFSLIAITPCYIWLMTRIFTVRSFLLVFGVAWLSFHSSWSVATRHLLWRSIVIRKILTFTTGLKFSLVDKNIELTVLNDFQISNVGTGKTVEFHILQNQRRWLGVGWSNTLLPFERGPFTTEDLEKSWDSLESFQFPEITQATCRWRWLDANWKTDDSFAPGEGWIYYNNSWEEPSNTDSLTRFTRTKRWKRRALVIVEDDGTT.

5 helical membrane passes run 24–44 (LLNM…VIFL), 63–83 (FIAI…ACTV), 84–104 (LPTI…TTID), 151–171 (GFSL…IFTV), and 173–193 (SFLL…SVAT). An N-linked (GlcNAc...) asparagine glycan is attached at asparagine 319.

The protein belongs to the PEX28-32 family. PEX30/31 subfamily.

It localises to the peroxisome membrane. It is found in the endoplasmic reticulum membrane. In terms of biological role, with PEX24, contributes to tethering of peroxisomes to the endoplasmic reticulum for organelle biogenesis, positioning and segregation. The sequence is that of Peroxisomal membrane protein PEX32 from Ogataea parapolymorpha (strain ATCC 26012 / BCRC 20466 / JCM 22074 / NRRL Y-7560 / DL-1) (Yeast).